The following is a 686-amino-acid chain: Chondroitin synthase (686 aa).

A galactosaminyltransferase; A1 domain region spans residues 130–417 (YVWAGKRKEL…LLQQKVPYFY (288 aa)). Residues Pro157, Arg161, Asp188, Tyr217, Arg223, and 239-240 (DC) contribute to the UDP-N-acetyl-alpha-D-galactosamine site. Asp241 contacts Mn(2+). Residue 361 to 362 (ED) coordinates UDP-N-acetyl-alpha-D-galactosamine. Position 386 (His386) interacts with Mn(2+). A glucuronosyltransferase; A2 domain region spans residues 418–682 (RKKEKIESAT…ECRKYTWEKI (265 aa)). Residues Tyr441, Asp469, and 517 to 520 (QLDS) each bind UDP-alpha-D-glucuronate. Asp521 provides a ligand contact to Mn(2+). Residues His581 and 603-604 (AV) each bind UDP-alpha-D-glucuronate. His631 lines the Mn(2+) pocket.

This sequence belongs to the glycosyltransferase 2 family. CS/HAS subfamily. Mn(2+) serves as cofactor.

The catalysed reaction is 3-O-(beta-D-GlcA-(1-&gt;3)-beta-D-GalNAc-(1-&gt;4)-beta-D-GlcA-(1-&gt;3)-beta-D-Gal-(1-&gt;3)-beta-D-Gal-(1-&gt;4)-beta-D-Xyl)-L-seryl-[protein] + UDP-N-acetyl-alpha-D-galactosamine = 3-O-(beta-D-GalNAc-(1-&gt;4)-beta-D-GlcA-(1-&gt;3)-beta-D-GalNAc-(1-&gt;4)-beta-D-GlcA-(1-&gt;3)-beta-D-Gal-(1-&gt;3)-beta-D-Gal-(1-&gt;4)-beta-D-Xyl)-L-seryl-[protein] + UDP + H(+). It carries out the reaction 3-O-{beta-D-GlcA-(1-&gt;3)-[beta-D-GalNAc-(1-&gt;4)-beta-D-GlcA-(1-&gt;3)](n)-beta-D-GalNAc-(1-&gt;4)-beta-D-GlcA-(1-&gt;3)-beta-D-Gal-(1-&gt;3)-beta-D-Gal-(1-&gt;4)-beta-D-Xyl}-L-seryl-[protein] + UDP-N-acetyl-alpha-D-galactosamine = 3-O-{[beta-D-GalNAc-(1-&gt;4)-beta-D-GlcA-(1-&gt;3)](n+1)-beta-D-GalNAc-(1-&gt;4)-beta-D-GlcA-(1-&gt;3)-beta-D-Gal-(1-&gt;3)-beta-D-Gal-(1-&gt;4)-beta-D-Xyl}-L-seryl-[protein] + UDP + H(+). It catalyses the reaction 3-O-(beta-D-GalNAc-(1-&gt;4)-beta-D-GlcA-(1-&gt;3)-beta-D-Gal-(1-&gt;3)-beta-D-Gal-(1-&gt;4)-beta-D-Xyl)-L-seryl-[protein] + UDP-alpha-D-glucuronate = 3-O-(beta-D-GlcA-(1-&gt;3)-beta-D-GalNAc-(1-&gt;4)-beta-D-GlcA-(1-&gt;3)-beta-D-Gal-(1-&gt;3)-beta-D-Gal-(1-&gt;4)-beta-D-Xyl)-L-seryl-[protein] + UDP + H(+). The enzyme catalyses 3-O-{[beta-D-GalNAc-(1-&gt;4)-beta-D-GlcA-(1-&gt;3)](n)-beta-D-GalNAc-(1-&gt;4)-beta-D-GlcA-(1-&gt;3)-beta-D-Gal-(1-&gt;3)-beta-D-Gal-(1-&gt;4)-beta-D-Xyl}-L-seryl-[protein] + UDP-alpha-D-glucuronate = 3-O-{beta-D-GlcA-(1-&gt;3)-[beta-D-GalNAc-(1-&gt;4)-beta-D-GlcA-(1-&gt;3)](n)-beta-D-GalNAc-(1-&gt;4)-beta-D-GlcA-(1-&gt;3)-beta-D-Gal-(1-&gt;3)-beta-D-Gal-(1-&gt;4)-beta-D-Xyl}-L-seryl-[protein] + UDP + H(+). Functionally, glycosyltransferase that catalyzes elongation of chondroitin, a polysaccharide composed of a repeating disaccharide of N-acetylgalactosamine (GalNAc) and glucuronic acid (GlcUA) units, by alternatively transferring the GlcUA and GalNAc moiety from UDP-GlcUA and UDP-GalNAc to the non-reducing ends of the chondroitin chain. Each chondroitin unit has the composition beta-(1-&gt;4)-GlcUA-beta-(1-&gt;3)-GalNAc. This is Chondroitin synthase (kfoC) from Escherichia coli.